Reading from the N-terminus, the 944-residue chain is 2-oxoglutarate dehydrogenase E1 component (944 aa).

The interval 915–944 (RRRSSPAEGDPTVHKKEQERIVSDSLTRKN) is disordered. Residues 925-936 (PTVHKKEQERIV) are compositionally biased toward basic and acidic residues.

It belongs to the alpha-ketoglutarate dehydrogenase family. Homodimer. Part of the 2-oxoglutarate dehydrogenase (OGDH) complex composed of E1 (2-oxoglutarate dehydrogenase), E2 (dihydrolipoamide succinyltransferase) and E3 (dihydrolipoamide dehydrogenase); the complex contains multiple copies of the three enzymatic components (E1, E2 and E3). It depends on thiamine diphosphate as a cofactor.

It carries out the reaction N(6)-[(R)-lipoyl]-L-lysyl-[protein] + 2-oxoglutarate + H(+) = N(6)-[(R)-S(8)-succinyldihydrolipoyl]-L-lysyl-[protein] + CO2. In terms of biological role, E1 component of the 2-oxoglutarate dehydrogenase (OGDH) complex which catalyzes the decarboxylation of 2-oxoglutarate, the first step in the conversion of 2-oxoglutarate to succinyl-CoA and CO(2). The protein is 2-oxoglutarate dehydrogenase E1 component of Bacillus velezensis (strain DSM 23117 / BGSC 10A6 / LMG 26770 / FZB42) (Bacillus amyloliquefaciens subsp. plantarum).